A 2549-amino-acid chain; its full sequence is Serine/threonine-protein kinase mTOR (2549 aa).

Met-1 bears the N-acetylmethionine mark. Positions 1–651 (MLGTGPAVAT…HVVSQTAVQV (651 aa)) are interaction with NBN. HEAT repeat units lie at residues 16 to 53 (SSNVSVLQQFASGLKSRNEETRAKAAKELQHYVTMELR), 55 to 99 (MSQE…VEGG), 100 to 137 (NSTRIGRFANYLRNLLPSSDPVVMEMASKAIGRLAMAG), 138 to 179 (DTFT…AISV), 180 to 220 (PTFF…LILT), 222 to 276 (QREP…RISS), 277 to 313 (MEGERLREEMEEITQQQLVHDKYCKDLMGFGTKPRHI), 314 to 364 (TPFT…CCRD), 365 to 409 (LMEE…AFTD), 410 to 445 (TQYLQDTMNHVLSCVKKEKERTAAFQALGLLSVAVR), 446 to 494 (SEFK…RAMG), 495 to 529 (PGIQQDIKELLEPMLAVGLSPALTAVLYDLSRQIP), 530 to 563 (QLKKDIQDGLLKMLSLVLMHKPLRHPGMPKGLAH), 564 to 596 (QLASPGLTTLPEASDVASITLALRTLGSFEFEG), 597 to 636 (HSLTQFVRHCADHFLNSEHKEIRMEAARTCSRLLTPSIHL), 637 to 683 (ISGH…DERF), 686 to 724 (HLAQAENLQALFVALNDQVFEIRELAICTVGRLSSMNPA), 727 to 766 (MPFLRKMLIQILTELEHSGIGRIKEQSARMLGHLVSNAPR), 769 to 811 (RPYM…VSGL), 814 to 853 (RKWVDELFIIIMDMLQDSSLLAKRQVALWTLGQLVASTGY), 857 to 893 (PYRKYPTLLEVLLNFLKTEQNQGTRREAIRVLGLLGA), 894 to 942 (LDPY…GNLP), 943 to 988 (LDEF…KCVQ), 989 to 1027 (FLPQVMPTFLNVIRVCDGAIREFLFQQLGMLVSFVKSHI), 1029 to 1068 (PYMDEIVTLMREFWVMNTSIQSTIILLIEQIVVALGGEFK), 1069 to 1105 (LYLPQLIPHMLRVFMHDNSQGRIVSIKLLAAIQLFGA), 1106 to 1144 (NLDDYLHLLLPPIVKLFDAPEVPLPSRKAALETVDRLTE), 1145 to 1188 (SLDF…GKKY), 1189 to 1225 (QIFIPMVNKVLVRHRINHQRYDVLICRIVKGYTLADE), 1226 to 1273 (EEDP…GAAR), 1274 to 1311 (RVSKDDWLEWLRRLSLELLKDSSSPSLRSCWALAQAYN), and 1312 to 1345 (PMARDLFNAAFVSCWSELNEDQQDELIRSIELAL). The residue at position 567 (Ser-567) is a Phosphoserine. Phosphothreonine is present on Thr-1162. Residue Lys-1218 is modified to N6-acetyllysine. Ser-1261 carries the post-translational modification Phosphoserine. TPR repeat units lie at residues 1346 to 1382 (TSQDIAEVTQTLLNLAEFMEHSDKGPLPLRDDNGIVL), 1383 to 1408 (LGERAAKCRAYAKALHYKELEFQKGP), 1409 to 1442 (TPAILESLISINNKLQQPEAASGVLEYAMKHFGE), 1443 to 1473 (LEIQATWYEKLHEWEDALVAYDKKMDTNKED), 1474 to 1507 (PELMLGRMRCLEALGEWGQLHQQCCEKWTLVNDE), 1508 to 1541 (TQAKMARMAAAAAWGLGQWDSMEEYTCMIPRDTH), 1542 to 1574 (DGAFYRAVLALHQDLFSLAQQCIDKARDLLDAE), 1575 to 1614 (LTAMAGESYSRAYGAMVSCHMLSELEEVIQYKLVPERREI), 1615 to 1649 (IRQIWWERLQGCQRIVEDWQKILMVRSLVVSPHED), 1650 to 1693 (MRTW…PTAH), 1694 to 1731 (PQVTYAYMKNMWKSARKIDAFQHMQHFVQTMQQQAQHA), 1732 to 1786 (IATE…DRSW), 1787 to 1846 (YKAW…STEG), 1898 to 1930 (NNLQDTLRVLTLWFDYGHWPDVNEALVEGVKAI), 1931 to 1970 (QIDTWLQVIPQLIARIDTPRPLVGRLIHQLLTDIGRYHPQ), and 1971 to 2005 (ALIYPLTVASKSTTTARHNAANKILKNMCEHSNTL). An FAT domain is found at 1382–1982 (LLGERAAKCR…IYPLTVASKS (601 aa)). 1D-myo-inositol hexakisphosphate contacts are provided by Lys-1662, Lys-1702, and Arg-1749. Low complexity predominate over residues 1825–1860 (ITNATTAATTAASAAAATSTEGSNSESEAESNENSP). The segment at 1825 to 1867 (ITNATTAATTAASAAAATSTEGSNSESEAESNENSPTPSPLQK) is disordered. The tract at residues 2012–2144 (VSEELIRVAI…DLELAVPGTY (133 aa)) is sufficient for interaction with the FKBP1A/rapamycin complex. A Glycyl lysine isopeptide (Lys-Gly) (interchain with G-Cter in ubiquitin) cross-link involves residue Lys-2066. Residues 2156–2469 (IAPSLQVITS…GVELGEPAHK (314 aa)) form the PI3K/PI4K catalytic domain. The residue at position 2159 (Ser-2159) is a Phosphoserine; by TBK1. The segment at 2162-2168 (VITSKQR) is G-loop. Residue Thr-2164 is modified to Phosphothreonine. Positions 2165 and 2167 each coordinate ATP. Thr-2173 is modified (phosphothreonine; by PKB/AKT1). Positions 2185, 2187, 2190, 2225, 2238, 2239, 2240, and 2245 each coordinate ATP. Residues 2258–2296 (KILLNIEHRIMLRMAPDYDHLTLMQKVEVFEHAVNNTAG) form an interaction with MLST8 region. Residues 2335–2343 (GLGDRHPSN) are catalytic loop. Asn-2343 contributes to the Mg(2+) binding site. ATP-binding residues include Met-2345 and Ile-2356. The tract at residues 2355-2380 (HIDFGDCFEVAMTREKFPEKIPFRLT) is activation loop. Asp-2357 is a Mg(2+) binding site. Thr-2446 carries the post-translational modification Phosphothreonine; by RPS6KB1. A Phosphoserine; by RPS6KB1 modification is found at Ser-2448. Phosphoserine occurs at positions 2478 and 2481. One can recognise an FATC domain in the interval 2517–2549 (DTLDVPTQVELLIKQATSHENLCQCYIGWCPFW).

It belongs to the PI3/PI4-kinase family. As to quaternary structure, part of the mechanistic target of rapamycin complex 1 (mTORC1) which contains MTOR, MLST8 and RPTOR. The mTORC1 complex is a 1 Md obligate dimer of two stoichiometric heterotetramers with overall dimensions of 290 A x 210 A x 135 A. It has a rhomboid shape and a central cavity, the dimeric interfaces are formed by interlocking interactions between the two MTOR and the two RPTOR subunits. The MLST8 subunit forms distal foot-like protuberances, and contacts only one MTOR within the complex, while the small AKT1S1/PRAS40 localizes to the midsection of the central core, in close proximity to RPTOR. mTORC1 associates with AKT1S1/PRAS40, which inhibits its activity by blocking MTOR substrate-recruitment site. Component of the mechanistic target of rapamycin complex 2 (mTORC2), consisting in two heterotretramers composed of MTOR, MLST8, RICTOR and MAPKAP1/SIN1. Interacts with PLPP7 and PML. Interacts with PRR5 and RICTOR; the interaction is direct within the mTORC2 complex and interaction with RICTOR is enhanced by deubiquitination of RICTOR by USP9X. mTORC1 and mTORC2 associate with DEPTOR, which regulates their activity. Interacts with WAC; WAC positively regulates MTOR activity by promoting the assembly of the TTT complex composed of TELO2, TTI1 and TTI2 and the RUVBL complex composed of RUVBL1 and RUVBL2 into the TTT-RUVBL complex which leads to the dimerization of the mTORC1 complex and its subsequent activation. Interacts with UBQLN1. Interacts with TTI1 and TELO2. Interacts with CLIP1; phosphorylates and regulates CLIP1. Interacts with NBN. Interacts with HTR6. Interacts with BRAT1. Interacts with MEAK7 (via C-terminal domain); the interaction increases upon nutrient stimulation. Interacts with TM4SF5; the interaction is positively regulated by arginine and is negatively regulated by leucine. Interacts with GPR137B. Interacts with NCKAP1L. Interacts with TPCN1 and TPCN2; the interaction is required for TPCN1 and TPCN2 sensitivity to ATP. Interacts with ATP6V1A and with CRYAB, forming a ternary complex. Interacts with SLC38A7; this interaction mediates the recruitment of mTORC1 to the lysosome and its subsequent activation. Interacts with TSPAN8. Post-translationally, autophosphorylates when part of mTORC1 or mTORC2. Phosphorylation at Ser-1261, Ser-2159 and Thr-2164 promotes autophosphorylation. Phosphorylated at Ser-2448 by RPS6KB1. Phosphorylation in the kinase domain modulates the interactions of MTOR with RPTOR and AKT1S1/PRAS40 and leads to increased intrinsic mTORC1 kinase activity. Phosphorylation at Ser-2159 by TBK1 in response to growth factors and pathogen recognition receptors promotes mTORC1 activity. Phosphorylation at Ser-2159 by TBK1 in response to EGF growth factor promotes mTORC2 activity, leading to AKT1 phosphorylation and activation. Phosphorylation at Thr-2173 in the ATP-binding region by AKT1 strongly reduces kinase activity. In terms of processing, ubiquitinated at Lys-2066 by the SCF(FBXO22) complex via 'Lys-27'-linked ubiquitination prevents mTORC1 substrate recruitment.

Its subcellular location is the lysosome membrane. It is found in the endoplasmic reticulum membrane. The protein localises to the golgi apparatus membrane. It localises to the cell membrane. The protein resides in the mitochondrion outer membrane. Its subcellular location is the cytoplasm. It is found in the nucleus. The protein localises to the PML body. It localises to the microsome membrane. The protein resides in the cytoplasmic vesicle. Its subcellular location is the phagosome. The catalysed reaction is L-seryl-[protein] + ATP = O-phospho-L-seryl-[protein] + ADP + H(+). The enzyme catalyses L-threonyl-[protein] + ATP = O-phospho-L-threonyl-[protein] + ADP + H(+). It catalyses the reaction L-tyrosyl-[protein] + ATP = O-phospho-L-tyrosyl-[protein] + ADP + H(+). Its activity is regulated as follows. The mTORC1 complex is activated in response to nutrients, growth factors or amino acids: activation requires relocalization of the mTORC1 complex to lysosomes that is mediated by the Ragulator complex, SLC38A9, and the Rag GTPases RagA/RRAGA, RagB/RRAGB, RagC/RRAGC and RagD/RRAGD. Activation of mTORC1 by growth factors such as insulin involves AKT1-mediated phosphorylation of TSC1-TSC2, which leads to the activation of the RHEB GTPase a potent activator of the protein kinase activity of mTORC1. Insulin-stimulated and amino acid-dependent phosphorylation at Ser-1261 promotes autophosphorylation and the activation of mTORC1. On the other hand, low cellular energy levels can inhibit mTORC1 through activation of PRKAA1 while hypoxia inhibits mTORC1 through a REDD1-dependent mechanism which may also require PRKAA1. The kinase activity of MTOR within the mTORC1 complex is positively regulated by MLST8. The kinase activity of MTOR is inhibited by DEPTOR and AKT1S1. The non-canonical mTORC1 complex is independent of the RHEB GTPase and specifically mediates phosphorylation of MiT/TFE factors TFEB and TFE3 but not other mTORC1 substrates: it is activated by FLCN, which activates Rag GTPases RagC/RRAGC and RagD/RRAGD. MTOR is the target of the immunosuppressive and anti-cancer drug rapamycin which acts in complex with FKBP1A/FKBP12, and specifically inhibits its kinase activity. mTORC2 is also activated by growth factors, but seems to be nutrient-insensitive. mTORC2 associates and is directly activated by ribosomes. mTORC2 may also be regulated by RHEB but in an indirect manner through the PI3K signaling pathway. Its function is as follows. Serine/threonine protein kinase which is a central regulator of cellular metabolism, growth and survival in response to hormones, growth factors, nutrients, energy and stress signals. MTOR directly or indirectly regulates the phosphorylation of at least 800 proteins. Functions as part of 2 structurally and functionally distinct signaling complexes mTORC1 and mTORC2 (mTOR complex 1 and 2). In response to nutrients, growth factors or amino acids, mTORC1 is recruited to the lysosome membrane and promotes protein, lipid and nucleotide synthesis by phosphorylating key regulators of mRNA translation and ribosome synthesis. This includes phosphorylation of EIF4EBP1 and release of its inhibition toward the elongation initiation factor 4E (eiF4E). Moreover, phosphorylates and activates RPS6KB1 and RPS6KB2 that promote protein synthesis by modulating the activity of their downstream targets including ribosomal protein S6, eukaryotic translation initiation factor EIF4B, and the inhibitor of translation initiation PDCD4. Stimulates the pyrimidine biosynthesis pathway, both by acute regulation through RPS6KB1-mediated phosphorylation of the biosynthetic enzyme CAD, and delayed regulation, through transcriptional enhancement of the pentose phosphate pathway which produces 5-phosphoribosyl-1-pyrophosphate (PRPP), an allosteric activator of CAD at a later step in synthesis, this function is dependent on the mTORC1 complex. Regulates ribosome synthesis by activating RNA polymerase III-dependent transcription through phosphorylation and inhibition of MAF1 an RNA polymerase III-repressor. Activates dormant ribosomes by mediating phosphorylation of SERBP1, leading to SERBP1 inactivation and reactivation of translation. In parallel to protein synthesis, also regulates lipid synthesis through SREBF1/SREBP1 and LPIN1. To maintain energy homeostasis mTORC1 may also regulate mitochondrial biogenesis through regulation of PPARGC1A. In the same time, mTORC1 inhibits catabolic pathways: negatively regulates autophagy through phosphorylation of ULK1. Under nutrient sufficiency, phosphorylates ULK1 at 'Ser-758', disrupting the interaction with AMPK and preventing activation of ULK1. Also prevents autophagy through phosphorylation of the autophagy inhibitor DAP. Also prevents autophagy by phosphorylating RUBCNL/Pacer under nutrient-rich conditions. Prevents autophagy by mediating phosphorylation of AMBRA1, thereby inhibiting AMBRA1 ability to mediate ubiquitination of ULK1 and interaction between AMBRA1 and PPP2CA. mTORC1 exerts a feedback control on upstream growth factor signaling that includes phosphorylation and activation of GRB10 a INSR-dependent signaling suppressor. Among other potential targets mTORC1 may phosphorylate CLIP1 and regulate microtubules. The mTORC1 complex is inhibited in response to starvation and amino acid depletion. The non-canonical mTORC1 complex, which acts independently of RHEB, specifically mediates phosphorylation of MiT/TFE factors TFEB and TFE3 in the presence of nutrients, promoting their cytosolic retention and inactivation. Upon starvation or lysosomal stress, inhibition of mTORC1 induces dephosphorylation and nuclear translocation of TFEB and TFE3, promoting their transcription factor activity. The mTORC1 complex regulates pyroptosis in macrophages by promoting GSDMD oligomerization. MTOR phosphorylates RPTOR which in turn inhibits mTORC1. As part of the mTORC2 complex, MTOR transduces signals from growth factors to pathways involved in proliferation, cytoskeletal organization, lipogenesis and anabolic output. In response to growth factors, mTORC2 phosphorylates and activates AGC protein kinase family members, including AKT (AKT1, AKT2 and AKT3), PKC (PRKCA, PRKCB and PRKCE) and SGK1. In contrast to mTORC1, mTORC2 is nutrient-insensitive. mTORC2 plays a critical role in AKT1 activation by mediating phosphorylation of different sites depending on the context, such as 'Thr-450', 'Ser-473', 'Ser-477' or 'Thr-479', facilitating the phosphorylation of the activation loop of AKT1 on 'Thr-308' by PDPK1/PDK1 which is a prerequisite for full activation. mTORC2 also regulates the phosphorylation of SGK1 at 'Ser-422'. mTORC2 may regulate the actin cytoskeleton, through phosphorylation of PRKCA, PXN and activation of the Rho-type guanine nucleotide exchange factors RHOA and RAC1A or RAC1B. The mTORC2 complex also phosphorylates various proteins involved in insulin signaling, such as FBXW8 and IGF2BP1. May also regulate insulin signaling by acting as a tyrosine protein kinase that catalyzes phosphorylation of IGF1R and INSR. Regulates osteoclastogenesis by adjusting the expression of CEBPB isoforms. Plays an important regulatory role in the circadian clock function; regulates period length and rhythm amplitude of the suprachiasmatic nucleus (SCN) and liver clocks. This Mus musculus (Mouse) protein is Serine/threonine-protein kinase mTOR.